The following is a 259-amino-acid chain: Phosphatidylglycerol--prolipoprotein diacylglyceryl transferase (259 aa).

4 helical membrane-spanning segments follow: residues 12-32 (LSLH…VYLA), 46-66 (IIDF…IYYV), 83-103 (IWNG…VLFV), and 109-129 (VLNP…AQAI). An a 1,2-diacyl-sn-glycero-3-phospho-(1'-sn-glycerol)-binding site is contributed by arginine 131. 3 helical membrane passes run 167–187 (VPTF…IMVW), 194–214 (LLDG…RLVI), and 226–246 (GIRV…VFIF).

This sequence belongs to the Lgt family.

It localises to the cell membrane. The enzyme catalyses L-cysteinyl-[prolipoprotein] + a 1,2-diacyl-sn-glycero-3-phospho-(1'-sn-glycerol) = an S-1,2-diacyl-sn-glyceryl-L-cysteinyl-[prolipoprotein] + sn-glycerol 1-phosphate + H(+). It functions in the pathway protein modification; lipoprotein biosynthesis (diacylglyceryl transfer). Its function is as follows. Catalyzes the transfer of the diacylglyceryl group from phosphatidylglycerol to the sulfhydryl group of the N-terminal cysteine of a prolipoprotein, the first step in the formation of mature lipoproteins. In Streptococcus equi subsp. zooepidemicus (strain MGCS10565), this protein is Phosphatidylglycerol--prolipoprotein diacylglyceryl transferase.